The primary structure comprises 308 residues: MKVIFAGTPDFAAAALKAVAAAGFEIPLVLTQPDRPKGRGMQLTAPPVKQAALELGLRVAQPEKLRNNAEALQMLKEVEADVMVVAAYGLILPQEVLDTPKHGCLNIHASLLPRWRGAAPIQRAIEAGDAETGVCIMQMDIGLDTGDVVSEHRYAIQPTDTANEVHDALMEIGAAAVVADLQQLQSKGRLNAVKQPEEGVTYAQKLSKEEARIDWSESADIIERKIRAFNPVPAAWVEYQGKPMKIRRAEVVAQQGTAGEVLSCSADGLVVACGESALKITELQPAGGRRMNIAAFAAGRSIEAGAKL.

Ser110–Pro113 lines the (6S)-5,6,7,8-tetrahydrofolate pocket.

Belongs to the Fmt family.

It carries out the reaction L-methionyl-tRNA(fMet) + (6R)-10-formyltetrahydrofolate = N-formyl-L-methionyl-tRNA(fMet) + (6S)-5,6,7,8-tetrahydrofolate + H(+). Its function is as follows. Attaches a formyl group to the free amino group of methionyl-tRNA(fMet). The formyl group appears to play a dual role in the initiator identity of N-formylmethionyl-tRNA by promoting its recognition by IF2 and preventing the misappropriation of this tRNA by the elongation apparatus. The protein is Methionyl-tRNA formyltransferase of Neisseria gonorrhoeae (strain ATCC 700825 / FA 1090).